The chain runs to 366 residues: MNLAAMDPTTYDAQLEAKRIKLEQAFAQFETPSIEVFASDPEHYRMRAEFRVWHEGDDLYYYMFDKALNDKVRCDQYLPASTLINEMMAALIAELKPNPSLRHKLFQVDFLSTLSGEILVSLLYHRQLDDQWRAEAIALKAKLSSQFKVNIIGRARKQKIDLDKDFVVESLQVNDKVFHYKQIENSFTQPNAKVAIKMLEWAIDVTQNSQGDLLELYCGNGNFSIALAQNFNRVLATELAKPSVDAAQYNIEINGIDNLQIIRMSAEEFSDAMAKKRSFRRLEGIDLDSYLCNTIFVDPPRAGIDPATLDLVQGYERILYISCNPDTLKDNLQQLYKTHKVTRFALFDQFPYTDHMETGVLLERIK.

Positions 189, 217, 222, 238, and 298 each coordinate S-adenosyl-L-methionine. Cysteine 323 acts as the Nucleophile in catalysis. Glutamate 357 (proton acceptor) is an active-site residue.

The protein belongs to the class I-like SAM-binding methyltransferase superfamily. RNA M5U methyltransferase family. TrmA subfamily.

The enzyme catalyses uridine(54) in tRNA + S-adenosyl-L-methionine = 5-methyluridine(54) in tRNA + S-adenosyl-L-homocysteine + H(+). It carries out the reaction uridine(341) in tmRNA + S-adenosyl-L-methionine = 5-methyluridine(341) in tmRNA + S-adenosyl-L-homocysteine + H(+). Its function is as follows. Dual-specificity methyltransferase that catalyzes the formation of 5-methyluridine at position 54 (m5U54) in all tRNAs, and that of position 341 (m5U341) in tmRNA (transfer-mRNA). The sequence is that of tRNA/tmRNA (uracil-C(5))-methyltransferase from Shewanella oneidensis (strain ATCC 700550 / JCM 31522 / CIP 106686 / LMG 19005 / NCIMB 14063 / MR-1).